Here is a 156-residue protein sequence, read N- to C-terminus: Cyclic pyranopterin monophosphate synthase (156 aa).

Residues 75–77 (LCH) and 111–112 (ME) contribute to the substrate site. Aspartate 126 is a catalytic residue.

Belongs to the MoaC family. Homohexamer; trimer of dimers.

It carries out the reaction (8S)-3',8-cyclo-7,8-dihydroguanosine 5'-triphosphate = cyclic pyranopterin phosphate + diphosphate. It functions in the pathway cofactor biosynthesis; molybdopterin biosynthesis. Functionally, catalyzes the conversion of (8S)-3',8-cyclo-7,8-dihydroguanosine 5'-triphosphate to cyclic pyranopterin monophosphate (cPMP). This chain is Cyclic pyranopterin monophosphate synthase, found in Caulobacter sp. (strain K31).